Here is a 419-residue protein sequence, read N- to C-terminus: L-rhamnose isomerase (419 aa).

Mn(2+) contacts are provided by H262, D294, and D296.

It belongs to the rhamnose isomerase family. Homotetramer. Mn(2+) serves as cofactor.

It is found in the cytoplasm. The catalysed reaction is L-rhamnopyranose = L-rhamnulose. Its pathway is carbohydrate degradation; L-rhamnose degradation; glycerone phosphate from L-rhamnose: step 1/3. Catalyzes the interconversion of L-rhamnose and L-rhamnulose. This is L-rhamnose isomerase from Citrobacter koseri (strain ATCC BAA-895 / CDC 4225-83 / SGSC4696).